Here is a 175-residue protein sequence, read N- to C-terminus: Microfibril-associated glycoprotein 3 (175 aa).

The Cytoplasmic portion of the chain corresponds to 1 to 175 (FRTEGAEKLQ…KDGSFESCQL (175 aa)). The interval 85-175 (KERPALNAQD…KDGSFESCQL (91 aa)) is disordered. The span at 145 to 175 (QDSSHFSPPDDTGSTESNSNYKDGSFESCQL) shows a compositional bias: polar residues.

Glycosylated.

The protein resides in the cell membrane. Functionally, component of the elastin-associated microfibrils. This chain is Microfibril-associated glycoprotein 3 (MFAP3), found in Bos taurus (Bovine).